Here is a 164-residue protein sequence, read N- to C-terminus: NAD(P)H-quinone oxidoreductase subunit I, chloroplastic (164 aa).

4Fe-4S ferredoxin-type domains are found at residues 55-84 (GRIH…VDWK) and 95-124 (LNYS…MTEE). Cysteine 64, cysteine 67, cysteine 70, cysteine 74, cysteine 104, cysteine 107, cysteine 110, and cysteine 114 together coordinate [4Fe-4S] cluster.

Belongs to the complex I 23 kDa subunit family. NDH is composed of at least 16 different subunits, 5 of which are encoded in the nucleus. It depends on [4Fe-4S] cluster as a cofactor.

It is found in the plastid. It localises to the chloroplast thylakoid membrane. It catalyses the reaction a plastoquinone + NADH + (n+1) H(+)(in) = a plastoquinol + NAD(+) + n H(+)(out). It carries out the reaction a plastoquinone + NADPH + (n+1) H(+)(in) = a plastoquinol + NADP(+) + n H(+)(out). NDH shuttles electrons from NAD(P)H:plastoquinone, via FMN and iron-sulfur (Fe-S) centers, to quinones in the photosynthetic chain and possibly in a chloroplast respiratory chain. The immediate electron acceptor for the enzyme in this species is believed to be plastoquinone. Couples the redox reaction to proton translocation, and thus conserves the redox energy in a proton gradient. The chain is NAD(P)H-quinone oxidoreductase subunit I, chloroplastic from Daucus carota (Wild carrot).